We begin with the raw amino-acid sequence, 331 residues long: Isopenicillin N synthase (331 aa).

Residues Arg-87, Tyr-91, Ser-183, and Tyr-189 each coordinate isopenicillin N. Residues Arg-87, Tyr-91, Ser-183, Tyr-189, His-214, and Asp-216 each coordinate N-[(5S)-5-amino-5-carboxypentanoyl]-L-cysteinyl-D-valine. Residues 176–288 (KKEDALSSVV…RQSLPFFVNL (113 aa)) enclose the Fe2OG dioxygenase domain. Positions 214, 216, and 270 each coordinate Fe(2+). Arg-279 serves as a coordination point for 2-oxoglutarate. Isopenicillin N is bound at residue Ser-281. Position 281 (Ser-281) interacts with N-[(5S)-5-amino-5-carboxypentanoyl]-L-cysteinyl-D-valine.

The protein belongs to the iron/ascorbate-dependent oxidoreductase family. As to quaternary structure, monomer. Fe(2+) is required as a cofactor.

The protein resides in the cytoplasm. The protein localises to the cytosol. It catalyses the reaction N-[(5S)-5-amino-5-carboxypentanoyl]-L-cysteinyl-D-valine + O2 = isopenicillin N + 2 H2O. The protein operates within antibiotic biosynthesis; penicillin G biosynthesis; penicillin G from L-alpha-aminoadipate and L-cysteine and L-valine: step 2/3. Isopenicillin N synthase; part of the gene cluster that mediates the biosynthesis of penicillin, the world's most important antibiotic. IpnA catalyzes the cyclization of the tripeptide N-[(5S)-5-amino-5-carboxypentanoyl]-L-cysteinyl-D-valine (LLD-ACV or ACV) to form isopenicillin N (IPN) that contains the beta-lactam nucleus. The penicillin biosynthesis occurs via 3 enzymatic steps, the first corresponding to the production of the tripeptide N-[(5S)-5-amino-5-carboxypentanoyl]-L-cysteinyl-D-valine (LLD-ACV or ACV) by the NRPS acvA. The tripeptide ACV is then cyclized to isopenicillin N (IPN) by the isopenicillin N synthase ipnA that forms the beta-lactam nucleus. Finally, the alpha-aminoadipyl side chain is exchanged for phenylacetic acid by the isopenicillin N acyltransferase aatA to yield penicillin in the peroxisomal matrix. In Penicillium chrysogenum (Penicillium notatum), this protein is Isopenicillin N synthase.